A 264-amino-acid chain; its full sequence is Thymidylate synthase (264 aa).

Arg21 contacts dUMP. Position 51 (His51) interacts with (6R)-5,10-methylene-5,6,7,8-tetrahydrofolate. Position 126 to 127 (Arg126 to Arg127) interacts with dUMP. The Nucleophile role is filled by Cys146. DUMP contacts are provided by residues Arg166–Asp169, Asn177, and His207–Tyr209. Asp169 serves as a coordination point for (6R)-5,10-methylene-5,6,7,8-tetrahydrofolate. Ala263 is a (6R)-5,10-methylene-5,6,7,8-tetrahydrofolate binding site.

The protein belongs to the thymidylate synthase family. Bacterial-type ThyA subfamily. In terms of assembly, homodimer.

The protein localises to the cytoplasm. It carries out the reaction dUMP + (6R)-5,10-methylene-5,6,7,8-tetrahydrofolate = 7,8-dihydrofolate + dTMP. The protein operates within pyrimidine metabolism; dTTP biosynthesis. Functionally, catalyzes the reductive methylation of 2'-deoxyuridine-5'-monophosphate (dUMP) to 2'-deoxythymidine-5'-monophosphate (dTMP) while utilizing 5,10-methylenetetrahydrofolate (mTHF) as the methyl donor and reductant in the reaction, yielding dihydrofolate (DHF) as a by-product. This enzymatic reaction provides an intracellular de novo source of dTMP, an essential precursor for DNA biosynthesis. The sequence is that of Thymidylate synthase from Nitrosomonas europaea (strain ATCC 19718 / CIP 103999 / KCTC 2705 / NBRC 14298).